The sequence spans 1937 residues: MSASSDAEMAVFGEAAPYLRKSEKERIEAQNKPFDAKTSVFVAEPKESYVKSTIQSKEGGKVTVKTEGGATLTVREDQVFPMNPPKYDKIEDMAMMTHLHEPGVLYNLKERYAAWMIYTYSGLFCVTVNPYKWLPVYKPEVVAAYRGKKRQEAPPHIFSISDNAYQFMLTDRENQSILITGESGAGKTVNTKRVIQYFATIAVTGEKKKDESGKMQGTLEDQIISANPLLEAFGNAKTVRNDNSSRFGKFIRIHFGTTGKLASADIETYLLEKSRVTFQLKAERSYHIFYQITSNKKPDLIEMLLITTNPYDYAFVSQGEITVPSIDDQEELMATDSAIDILGFTPEEKVSIYKLTGAVMHYGNMKFKQKQREEQAEPDGTEVADKAAYLQSLNSADLLKALCYPRVKVGNEYVTKGQTVQQVYNAVGALAKAVYEKMFLWMVTRINQQLDTKQPRQYFIGVLDIAGFEIFDFNSLEQLCINFTNEKLQQFFNHHMFVLEQEEYKKEGIEWTFIDFGMDLAACIELIEKPLGIFSILEEECMFPKATDTSFKNKLYDQHLGKSANFQKPKVVKGKAEAHFSLIHYAGTVDYNITGWLDKNKDPLNDTVVGLYQKSAMKTLASLFSTYASAEADSSAKKGAKKKGSSFQTVSALFRENLNKLMTNLRSTHPHFVRCIIPNETKTPGAMEHELVLHQLRCNGVLEGIRICRKGFPSRILYGDFKQRYKVLNASAIPEGQFIDSKKASEKLLASIDIDHTQYKFGHTKVFFKAGLLGLLEEMRDEKLAQIITRTQAVCRGFLMRVEYQKMLQRREALFCIQYNVRAFMNVKHWPWMKLFFKIKPLLKSAETEKEMATMKEEFQKTKDELAKSEAKRKELEEKMVTLLKEKNDLQLQVQSEADSLADAEERCEQLIKNKIQLEAKIKEVTERAEEEEEINAELTAKKRKLEDECSELKKDIDDLELTLAKVEKEKHATENKVKNLTEEMAGLDETIAKLSKEKKALQETHQQTLDDLQAEEDKVNILTKAKTKLEQQVDDLEGSLEQEKKLRMDLERAKRKLEGDLKLAQESTMDMENDKQQLDEKLEKKEFEISNLISKIEDEQAVEIQLQKKIKELQARIEELGEEIEAERASRAKAEKQRSDLSRELEEISERLEEAGGATSAQVELNKKREAEFQKLRRDLEEATLQHEAMVAALRKKHADSMAELGEQIDNLQRVKQKLEKEKSELKMETDDLSSNAEAISKAKGNLEKMCRSLEDQVSELKTKEEEQQRLINDLTAQRARLQTEAGEYSRQLDEKDALVSQLSRSKQASTQQIEELKHQLEEETKAKNALAHALQSSRHDCDLLREQYEEEQEGKAELQRALSKANSEVAQWRTKYETDAIQRTEELEEAKKKLAQRLQEAEEHVEAVNAKCASLEKTKQRLQNEVEDLMLDVERSNAACAALDKKQRNFDKVLSEWKQKYEETQAELEASQKESRSLSTELFKVKNVYEESLDQLETLRRENKNLQQEISDLTEQIAEGGKQIHELEKIKKQVEQEKCEIQAALEEAEASLEHEEGKILRIQLELNQVKSEVDRKIAEKDEEIDQLKRNHTRVVETMQSTLDAEIRSRNDALRVKKKMEGDLNEMEIQLNHANRLAAESLRNYRNTQGILKETQLHLDDALRGQEDLKEQLAIVERRANLLQAEIEELWATLEQTERSRKIAEQELLDASERVQLLHTQNTSLINTKKKLENDVSQLQSEVEEVIQESRNAEEKAKKAITDAAMMAEELKKEQDTSAHLERMKKNLEQTVKDLQHRLDEAEQLALKGGKKQIQKLEARVRELEGEVENEQKRNAEAVKGLRKHERRVKELTYQTEEDRKNVLRLQDLVDKLQAKVKSYKRQAEEAEEQSNANLSKFRKLQHELEEAEERADIAESQVNKLRVKSREVHTKISAE.

A Myosin N-terminal SH3-like domain is found at 35–84 (DAKTSVFVAEPKESYVKSTIQSKEGGKVTVKTEGGATLTVREDQVFPMNP). Phosphothreonine occurs at positions 66 and 71. The Myosin motor domain occupies 88–781 (DKIEDMAMMT…LLGLLEEMRD (694 aa)). Residue K132 is modified to N6,N6,N6-trimethyllysine. 181–188 (GESGAGKT) serves as a coordination point for ATP. Phosphotyrosine is present on Y389. A Phosphoserine modification is found at S392. Residue T419 is modified to Phosphothreonine. Y424 is subject to Phosphotyrosine. A Phosphoserine modification is found at S625. The tract at residues 658–680 (LNKLMTNLRSTHPHFVRCIIPNE) is actin-binding. H756 bears the Pros-methylhistidine mark. The tract at residues 760–774 (KFGHTKVFFKAGLLG) is actin-binding. Positions 781 to 813 (DEKLAQIITRTQAVCRGFLMRVEYQKMLQRREA) constitute an IQ domain. The stretch at 842–1937 (LLKSAETEKE…REVHTKISAE (1096 aa)) forms a coiled coil. A phosphoserine mark is found at S1091 and S1095. Residues 1126-1146 (EAERASRAKAEKQRSDLSREL) form a disordered region. Residues 1127–1146 (AERASRAKAEKQRSDLSREL) are compositionally biased toward basic and acidic residues. A phosphoserine mark is found at S1161, S1236, S1242, and S1260. T1264 and T1285 each carry phosphothreonine. Residues S1291, S1302, and S1305 each carry the phosphoserine modification. The residue at position 1463 (Y1463) is a Phosphotyrosine. Position 1466 is a phosphothreonine (T1466). S1473 carries the post-translational modification Phosphoserine. Phosphotyrosine is present on Y1491. At S1494 the chain carries Phosphoserine. T1500 carries the post-translational modification Phosphothreonine. The residue at position 1513 (S1513) is a Phosphoserine. T1516 carries the post-translational modification Phosphothreonine. Residues S1553, S1573, S1602, S1713, and S1725 each carry the phosphoserine modification. The residue at position 1729 (T1729) is a Phosphothreonine. S1738 is modified (phosphoserine).

It belongs to the TRAFAC class myosin-kinesin ATPase superfamily. Myosin family. Muscle myosin is a hexameric protein that consists of 2 heavy chain subunits (MHC), 2 alkali light chain subunits (MLC) and 2 regulatory light chain subunits (MLC-2).

The protein resides in the cytoplasm. It localises to the myofibril. Functionally, muscle contraction. The sequence is that of Myosin-8 (MYH8) from Homo sapiens (Human).